We begin with the raw amino-acid sequence, 724 residues long: Methionine--tRNA ligase (724 aa).

The 'HIGH' region motif lies at 12 to 22 (PYVNNIPHLGN). The Zn(2+) site is built by cysteine 143, cysteine 146, cysteine 155, and cysteine 158. A 'KMSKS' region motif is present at residues 330–334 (KFSKS). Lysine 333 contacts ATP. Residues 560-665 (FREKVLLKVV…KNPIPGERII (106 aa)) form the tRNA-binding domain.

It belongs to the class-I aminoacyl-tRNA synthetase family. MetG type 1 subfamily. As to quaternary structure, homodimer. Requires Zn(2+) as cofactor.

It is found in the cytoplasm. The enzyme catalyses tRNA(Met) + L-methionine + ATP = L-methionyl-tRNA(Met) + AMP + diphosphate. Functionally, is required not only for elongation of protein synthesis but also for the initiation of all mRNA translation through initiator tRNA(fMet) aminoacylation. The chain is Methionine--tRNA ligase from Borrelia garinii subsp. bavariensis (strain ATCC BAA-2496 / DSM 23469 / PBi) (Borreliella bavariensis).